Reading from the N-terminus, the 383-residue chain is Acetylornithine deacetylase (383 aa).

H80 serves as a coordination point for Zn(2+). D82 is a catalytic residue. D112 lines the Zn(2+) pocket. Residue E144 is part of the active site. E145, E169, and H355 together coordinate Zn(2+).

The protein belongs to the peptidase M20A family. ArgE subfamily. In terms of assembly, homodimer. Zn(2+) is required as a cofactor. Co(2+) serves as cofactor. Requires glutathione as cofactor.

The protein resides in the cytoplasm. The catalysed reaction is N(2)-acetyl-L-ornithine + H2O = L-ornithine + acetate. The protein operates within amino-acid biosynthesis; L-arginine biosynthesis; L-ornithine from N(2)-acetyl-L-ornithine (linear): step 1/1. Functionally, catalyzes the hydrolysis of the amide bond of N(2)-acetylated L-amino acids. Cleaves the acetyl group from N-acetyl-L-ornithine to form L-ornithine, an intermediate in L-arginine biosynthesis pathway, and a branchpoint in the synthesis of polyamines. The sequence is that of Acetylornithine deacetylase from Escherichia coli O45:K1 (strain S88 / ExPEC).